The primary structure comprises 169 residues: Ribosome maturation factor RimM (169 aa).

The PRC barrel domain occupies 92–167; the sequence is PKDTYFICDI…YMKIKVVEGL (76 aa).

Belongs to the RimM family. In terms of assembly, binds ribosomal protein uS19.

It localises to the cytoplasm. An accessory protein needed during the final step in the assembly of 30S ribosomal subunit, possibly for assembly of the head region. Essential for efficient processing of 16S rRNA. May be needed both before and after RbfA during the maturation of 16S rRNA. It has affinity for free ribosomal 30S subunits but not for 70S ribosomes. The sequence is that of Ribosome maturation factor RimM from Caldicellulosiruptor bescii (strain ATCC BAA-1888 / DSM 6725 / KCTC 15123 / Z-1320) (Anaerocellum thermophilum).